A 1157-amino-acid polypeptide reads, in one-letter code: Folliculin-interacting protein 1 (1157 aa).

Residues 37-467 (FDPSQIRLIV…TVMPNGQPPI (431 aa)) enclose the uDENN FNIP1/2-type domain. Disordered stretches follow at residues 92–120 (PGGD…CPKY), 616–665 (SQQE…TKVE), 769–796 (SPPT…NRDC), and 904–955 (VPHG…NYYG). Residues 95 to 111 (DSSSSLDSSINSSSSFS) are compositionally biased toward low complexity. One can recognise a cDENN FNIP1/2-type domain in the interval 475 to 1083 (SSQSVDMLAK…VSNLLHSTLQ (609 aa)). Positions 651-664 (ADGHQPRTCQDTKV) are enriched in basic and acidic residues. Over residues 904–916 (VPHGDRENAEKKV) the composition is skewed to basic and acidic residues. The region spanning 1093–1148 (FCVMHLEDRLQELYFKSKMLSEYLKGQMRVHVKELGVVLGIESSDLPLLAAVASTH) is the dDENN FNIP1/2-type domain.

Belongs to the FNIP family. In terms of assembly, homodimer and homomultimer. Heterodimer and heteromultimer with FNIP2. Component of the lysosomal folliculin complex (LFC).

The protein localises to the lysosome membrane. It localises to the cytoplasm. It is found in the cytosol. Its function is as follows. Binding partner of the GTPase-activating protein FLCN: involved in the cellular response to amino acid availability by regulating the non-canonical mTORC1 signaling cascade controlling the MiT/TFE factors TFEB and TFE3. Required to promote FLCN recruitment to lysosomes and interaction with Rag GTPases, leading to activation of the non-canonical mTORC1 signaling. In low-amino acid conditions, component of the lysosomal folliculin complex (LFC) on the membrane of lysosomes, which inhibits the GTPase-activating activity of FLCN, thereby inactivating mTORC1 and promoting nuclear translocation of TFEB and TFE3. Upon amino acid restimulation, disassembly of the LFC complex liberates the GTPase-activating activity of FLCN, leading to activation of mTORC1 and subsequent inactivation of TFEB and TFE3. In addition to its role in mTORC1 signaling, also acts as a co-chaperone of HSP90AA1/Hsp90: inhibits the ATPase activity of HSP90AA1/Hsp90, leading to activate both kinase and non-kinase client proteins of HSP90AA1/Hsp90. Acts as a scaffold to load client protein FLCN onto HSP90AA1/Hsp90. This chain is Folliculin-interacting protein 1, found in Gallus gallus (Chicken).